A 780-amino-acid chain; its full sequence is ATP-dependent 6-phosphofructokinase, muscle type (780 aa).

Residue threonine 2 is modified to N-acetylthreonine. The segment at 2–390 (THEEHHAAKT…NWEVYKLLAH (389 aa)) is N-terminal catalytic PFK domain 1. ATP is bound by residues glycine 25, 88-89 (RC), and 118-121 (GDGS). Aspartate 119 lines the Mg(2+) pocket. Serine 133 carries the phosphoserine modification. Substrate is bound by residues 164 to 166 (SID), arginine 201, 208 to 210 (MGR), glutamate 264, arginine 292, and 298 to 301 (HVQR). Aspartate 166 functions as the Proton acceptor in the catalytic mechanism. Phosphoserine is present on serine 377. The interdomain linker stretch occupies residues 391 to 401 (VRPPVSKGGLH). Positions 402-780 (TVAVMNVGAP…SRKRSGEAAV (379 aa)) are C-terminal regulatory PFK domain 2. Beta-D-fructose 2,6-bisphosphate-binding positions include arginine 471 and 528–532 (TVSNN). Serine 530 carries O-linked (GlcNAc) serine glycosylation. Lysine 557 bears the N6-(2-hydroxyisobutyryl)lysine mark. Beta-D-fructose 2,6-bisphosphate is bound by residues arginine 566, 573-575 (MGG), glutamate 629, arginine 655, and 661-664 (HMQQ). Serine 667 carries the phosphoserine modification. A beta-D-fructose 2,6-bisphosphate-binding site is contributed by arginine 735. Serine 775 is modified (phosphoserine).

This sequence belongs to the phosphofructokinase type A (PFKA) family. ATP-dependent PFK group I subfamily. Eukaryotic two domain clade 'E' sub-subfamily. Homo- and heterotetramers. Phosphofructokinase (PFK) enzyme functions as a tetramer composed of different combinations of 3 types of subunits, called PFKM (M), PFKL (L) and PFKP (P). The composition of the PFK tetramer differs according to the tissue type it is present in. The kinetic and regulatory properties of the tetrameric enzyme are dependent on the subunit composition, hence can vary across tissues. Isoform 2 and isoform 3 interact (via N-terminal testis-specific region) with GSTM5. Isoform 2 and isoform 3 interact (via C-terminus) with HK1 (via N-terminal spermatogenic cell-specific region). The cofactor is Mg(2+). Post-translationally, glcNAcylation decreases enzyme activity. In terms of tissue distribution, isoform 1 is expressed in skeletal muscle (at protein level). Isoform 2 and isoform 3 are testis-specific and are detected in quiescent sperm (at protein level). They are first detected in the cytoplasm of round spermatids and subsequently in the flagellum of elongated spermatids extending into the seminiferous tubule lumen (at protein level). Isoform 2 is expressed at higher level than isoform 3 in testis.

The protein localises to the cytoplasm. It is found in the cell projection. The protein resides in the cilium. Its subcellular location is the flagellum. The catalysed reaction is beta-D-fructose 6-phosphate + ATP = beta-D-fructose 1,6-bisphosphate + ADP + H(+). Its pathway is carbohydrate degradation; glycolysis; D-glyceraldehyde 3-phosphate and glycerone phosphate from D-glucose: step 3/4. With respect to regulation, allosterically activated by ADP, AMP, or fructose 2,6-bisphosphate, and allosterically inhibited by ATP or citrate. Functionally, catalyzes the phosphorylation of D-fructose 6-phosphate to fructose 1,6-bisphosphate by ATP, the first committing step of glycolysis. This is ATP-dependent 6-phosphofructokinase, muscle type (Pfkm) from Mus musculus (Mouse).